We begin with the raw amino-acid sequence, 66 residues long: Light-harvesting protein B-800-850 alpha chain B (66 aa).

Residues 1 to 11 (MNQGRIWTVVN) are Cytoplasmic-facing. The helical transmembrane segment at 12 to 35 (PGVGLPLLLGSVTVIAILVHYAVL) threads the bilayer. Position 31 (His-31) interacts with a bacteriochlorophyll. Over 36 to 66 (SNTTWFPKYWNGATVAAPAAAPAPAAPAAKK) the chain is Periplasmic.

This sequence belongs to the antenna complex alpha subunit family. In terms of assembly, the core complex is formed by different alpha and beta chains, binding bacteriochlorophyll molecules, and arranged most probably in tetrameric structures disposed around the reaction center. The non-pigmented gamma chains may constitute additional components.

The protein resides in the cell inner membrane. Antenna complexes are light-harvesting systems, which transfer the excitation energy to the reaction centers. In Rhodopseudomonas palustris (strain ATCC BAA-98 / CGA009), this protein is Light-harvesting protein B-800-850 alpha chain B (pucAB).